Reading from the N-terminus, the 119-residue chain is Ribonuclease P protein component (119 aa).

The protein belongs to the RnpA family. Consists of a catalytic RNA component (M1 or rnpB) and a protein subunit.

The enzyme catalyses Endonucleolytic cleavage of RNA, removing 5'-extranucleotides from tRNA precursor.. Functionally, RNaseP catalyzes the removal of the 5'-leader sequence from pre-tRNA to produce the mature 5'-terminus. It can also cleave other RNA substrates such as 4.5S RNA. The protein component plays an auxiliary but essential role in vivo by binding to the 5'-leader sequence and broadening the substrate specificity of the ribozyme. In Pasteurella multocida (strain Pm70), this protein is Ribonuclease P protein component.